Consider the following 204-residue polypeptide: Probable molybdenum cofactor guanylyltransferase (204 aa).

Residues 10-12, K22, D75, and D104 contribute to the GTP site; that span reads LSG. D104 is a Mg(2+) binding site.

Belongs to the MobA family. Mg(2+) serves as cofactor.

The protein resides in the cytoplasm. It catalyses the reaction Mo-molybdopterin + GTP + H(+) = Mo-molybdopterin guanine dinucleotide + diphosphate. Its function is as follows. Transfers a GMP moiety from GTP to Mo-molybdopterin (Mo-MPT) cofactor (Moco or molybdenum cofactor) to form Mo-molybdopterin guanine dinucleotide (Mo-MGD) cofactor. The sequence is that of Probable molybdenum cofactor guanylyltransferase from Methanocaldococcus jannaschii (strain ATCC 43067 / DSM 2661 / JAL-1 / JCM 10045 / NBRC 100440) (Methanococcus jannaschii).